Here is a 514-residue protein sequence, read N- to C-terminus: L-Threonine dehydratase biosynthetic IlvA (514 aa).

Lysine 62 is modified (N6-(pyridoxal phosphate)lysine). Pyridoxal 5'-phosphate contacts are provided by residues asparagine 89, 188 to 192, and serine 315; that span reads GGGGL. ACT-like domains are found at residues 339 to 411 and 434 to 504; these read ALLA…DLSD and RLYS…DESN.

The protein belongs to the serine/threonine dehydratase family. In terms of assembly, homotetramer. It depends on pyridoxal 5'-phosphate as a cofactor.

The enzyme catalyses L-threonine = 2-oxobutanoate + NH4(+). It participates in amino-acid biosynthesis; L-isoleucine biosynthesis; 2-oxobutanoate from L-threonine: step 1/1. Its activity is regulated as follows. Isoleucine allosterically inhibits whereas valine allosterically activates this enzyme. Catalyzes the anaerobic formation of alpha-ketobutyrate and ammonia from threonine in a two-step reaction. The first step involved a dehydration of threonine and a production of enamine intermediates (aminocrotonate), which tautomerizes to its imine form (iminobutyrate). Both intermediates are unstable and short-lived. The second step is the nonenzymatic hydrolysis of the enamine/imine intermediates to form 2-ketobutyrate and free ammonia. In the low water environment of the cell, the second step is accelerated by RidA. In Salmonella typhimurium (strain LT2 / SGSC1412 / ATCC 700720), this protein is L-Threonine dehydratase biosynthetic IlvA (ilvA).